A 56-amino-acid chain; its full sequence is Ribosome biogenesis protein Nop10 (56 aa).

Belongs to the NOP10 family.

In terms of biological role, involved in ribosome biogenesis; more specifically in 18S rRNA pseudouridylation and in cleavage of pre-rRNA. This Methanococcoides burtonii (strain DSM 6242 / NBRC 107633 / OCM 468 / ACE-M) protein is Ribosome biogenesis protein Nop10.